A 63-amino-acid chain; its full sequence is Conotoxin PnMRCL-0111 (63 aa).

Residues 1-22 (MHCLSVFVILLLLTASAPSVDA) form the signal peptide. Positions 23-50 (QPKTEDDVPLSSFHDDLQRTVRTLLDIR) are excised as a propeptide. W62 is subject to Tryptophan amide.

It belongs to the conotoxin T superfamily. Post-translationally, contains 2 disulfide bonds that can be either 'C1-C3, C2-C4' or 'C1-C4, C2-C3', since these disulfide connectivities have been observed for conotoxins with cysteine framework V (for examples, see AC P0DQQ7 and AC P81755). Expressed by the venom duct.

It is found in the secreted. In Conus pennaceus (Feathered cone), this protein is Conotoxin PnMRCL-0111.